The following is a 302-amino-acid chain: N-acetyl-D-glucosamine kinase (302 aa).

ATP contacts are provided by residues 4–11 (GFDVGGTK) and 133–140 (GFGGGLVY). Positions 157, 177, 179, and 184 each coordinate Zn(2+).

Belongs to the ROK (NagC/XylR) family. NagK subfamily.

It catalyses the reaction N-acetyl-D-glucosamine + ATP = N-acetyl-D-glucosamine 6-phosphate + ADP + H(+). The protein operates within cell wall biogenesis; peptidoglycan recycling. In terms of biological role, catalyzes the phosphorylation of N-acetyl-D-glucosamine (GlcNAc) derived from cell-wall degradation, yielding GlcNAc-6-P. The protein is N-acetyl-D-glucosamine kinase of Vibrio atlanticus (strain LGP32) (Vibrio splendidus (strain Mel32)).